Reading from the N-terminus, the 176-residue chain is Macro domain-containing protein mll7730 (176 aa).

A Macro domain is found at Met1 to Arg174.

The protein belongs to the MacroD-type family.

The sequence is that of Macro domain-containing protein mll7730 from Mesorhizobium japonicum (strain LMG 29417 / CECT 9101 / MAFF 303099) (Mesorhizobium loti (strain MAFF 303099)).